The following is a 63-amino-acid chain: Small integral membrane protein 43 (63 aa).

2 important for interaction with SLC2A1 and SLC2A3 regions span residues 7 to 29 and 51 to 57; these read LLLYLALFFFLLFLLFLLLFVVI and HREPWGF. The chain crosses the membrane as a helical span at residues 9–29; that stretch reads LYLALFFFLLFLLFLLLFVVI.

In terms of assembly, interacts with glucose transporters SLC2A1/GLUT1 and SLC2A3/GLUT3; the interactions may promote SLC2A1- and SLC2A3-mediated glucose transport to meet the energy needs of mesendoderm differentiation.

Its subcellular location is the cell membrane. In terms of biological role, required for mesendoderm differentiation. Interacts with glucose transporters and promotes glucose uptake. Probably augments the glucose uptake capacity of glucose transporter proteins to meet the energy needs of mesendoderm differentiation. This is Small integral membrane protein 43 from Homo sapiens (Human).